Consider the following 207-residue polypeptide: MISSLRGTVLSASGGAAVIDVGGVGFAVQLTPDHARSLRVGDEAFVHTTLIVREDSLQLFGFSGLEQLQVFELLNGVSGVGPKSAISVLSVLSPDQVADAVAAADDAPFRAVSGIGPKTAKLIVVSLTGKLAACRRPSAPSARRPSAPSSVSDSVLVALVGLGWPEKVAGEAVAEVIAGTAESERDSVQTLLRLTLARLGPANQAAR.

Residues 1–63 (MISSLRGTVL…EDSLQLFGFS (63 aa)) are domain I. Positions 64–142 (GLEQLQVFEL…ACRRPSAPSA (79 aa)) are domain II. The interval 142–146 (ARRPS) is flexible linker. Residues 147 to 207 (APSSVSDSVL…RLGPANQAAR (61 aa)) form a domain III region.

The protein belongs to the RuvA family. Homotetramer. Forms an RuvA(8)-RuvB(12)-Holliday junction (HJ) complex. HJ DNA is sandwiched between 2 RuvA tetramers; dsDNA enters through RuvA and exits via RuvB. An RuvB hexamer assembles on each DNA strand where it exits the tetramer. Each RuvB hexamer is contacted by two RuvA subunits (via domain III) on 2 adjacent RuvB subunits; this complex drives branch migration. In the full resolvosome a probable DNA-RuvA(4)-RuvB(12)-RuvC(2) complex forms which resolves the HJ.

Its subcellular location is the cytoplasm. Functionally, the RuvA-RuvB-RuvC complex processes Holliday junction (HJ) DNA during genetic recombination and DNA repair, while the RuvA-RuvB complex plays an important role in the rescue of blocked DNA replication forks via replication fork reversal (RFR). RuvA specifically binds to HJ cruciform DNA, conferring on it an open structure. The RuvB hexamer acts as an ATP-dependent pump, pulling dsDNA into and through the RuvAB complex. HJ branch migration allows RuvC to scan DNA until it finds its consensus sequence, where it cleaves and resolves the cruciform DNA. The polypeptide is Holliday junction branch migration complex subunit RuvA (Leifsonia xyli subsp. xyli (strain CTCB07)).